Reading from the N-terminus, the 607-residue chain is Glycerophosphodiester phosphodiesterase domain-containing protein 5 (607 aa).

Residues 1 to 42 (MVRHQPLQYYEPQLCLSCLTGIYGCRWKRYQRSHDDTTPWER) are Cytoplasmic-facing. 2 disulfide bridges follow: cysteine 15–cysteine 18 and cysteine 25–cysteine 571. Residues 43-63 (LWFLLLVCTFSLTLTWLYFWW) traverse the membrane as a helical segment. Residues 64 to 89 (GVHNDYDEFNWYLYNRMGYWSDWSVP) lie on the Extracellular side of the membrane. The chain crosses the membrane as a helical span at residues 90–110 (ILVTSAAAFTYIAGLLVLALC). Residues 111–125 (HIAVGQQLNLHWIHK) lie on the Cytoplasmic side of the membrane. Residues 126 to 146 (MGLVVILASTVVAMSAVAQLW) form a helical membrane-spanning segment. Residues 147 to 160 (EDEWEVLLISLQGT) are Extracellular-facing. The helical transmembrane segment at 161-181 (APFLHIGALVAITALSWIVAG) threads the bilayer. At 182-192 (QFARAERSSSQ) the chain is on the cytoplasmic side. The helical transmembrane segment at 193-213 (LTILCTFFAVVFTFYLIPLTI) threads the bilayer. Residues 214–496 (SSPCIMEKKD…PLWIMPPDEY (283 aa)) are Extracellular-facing. A GP-PDE domain is found at 228–485 (PALIGHRGAP…DNSHTLSRVP (258 aa)). Residues asparagine 301, asparagine 336, asparagine 352, asparagine 374, and asparagine 448 are each glycosylated (N-linked (GlcNAc...) asparagine). Residues 497–517 (CLMWVTADLISFSLIIGIFVL) form a helical membrane-spanning segment. The Cytoplasmic segment spans residues 518–607 (QKWRLGGIRS…AKTVTEQSGH (90 aa)). The segment at 582–607 (ANSTATPVGPRNAGSRAKTVTEQSGH) is disordered.

This sequence belongs to the glycerophosphoryl diester phosphodiesterase family. Interacts with PRDX1; forms a mixed-disulfide with PRDX1, leading to disrupt intramolecular disulfide bond between Cys-25 and Cys-571. Post-translationally, intramolecular disulfide bond between Cys-25 and Cys-571 is reduced by PRDX1. In terms of tissue distribution, detected in brain, lung, heart, kidney and testis.

It is found in the endomembrane system. Its subcellular location is the cytoplasm. It localises to the perinuclear region. The protein localises to the cell projection. The protein resides in the growth cone. It carries out the reaction a 1,2-diacyl-sn-glycero-3-phospho-(1D-myo-inositol-4,5-bisphosphate) + H2O = 1D-myo-inositol 1,4,5-trisphosphate + a 1,2-diacyl-sn-glycerol + H(+). It catalyses the reaction sn-glycerol 3-phosphocholine + H2O = sn-glycerol 3-phosphate + choline + H(+). With respect to regulation, inhibited by high level of NaCl or urea. Functionally, glycerophosphodiester phosphodiesterase that promotes neurite formation and drives spinal motor neuron differentiation. Mediates the cleavage of glycosylphosphatidylinositol (GPI) anchor of target proteins: removes the GPI-anchor of RECK, leading to release RECK from the plasma membrane. May contribute to the osmotic regulation of cellular glycerophosphocholine. This chain is Glycerophosphodiester phosphodiesterase domain-containing protein 5, found in Mus musculus (Mouse).